Reading from the N-terminus, the 368-residue chain is Putative flavoprotein monooxygenase (368 aa).

Residues A14, E34, S41, 52–53, V110, A307, and I319 each bind FAD; that span reads IT.

Requires FAD as cofactor.

Its function is as follows. FAD-binding protein that may have monooxygenase activity using NADPH and/or NADH as an electron donor. The sequence is that of Putative flavoprotein monooxygenase from Staphylococcus aureus (strain Mu50 / ATCC 700699).